We begin with the raw amino-acid sequence, 340 residues long: 4-amino-5-hydroxymethyl-2-methylpyrimidine phosphate synthase THI13 (340 aa).

Lysine 62 bears the N6-(pyridoxal phosphate)lysine mark. Residue histidine 66 is part of the active site. Residue 115–118 (GEFG) participates in pyridoxal 5'-phosphate binding. The CCCFC; essential for catalytic activity, may be the site of iron coordination motif lies at 195–199 (CCCFC).

It belongs to the NMT1/THI5 family. In terms of assembly, homodimer. Requires Fe cation as cofactor.

The catalysed reaction is N(6)-(pyridoxal phosphate)-L-lysyl-[4-amino-5-hydroxymethyl-2-methylpyrimidine phosphate synthase] + L-histidyl-[4-amino-5-hydroxymethyl-2-methylpyrimidine phosphate synthase] + 2 Fe(3+) + 4 H2O = L-lysyl-[4-amino-5-hydroxymethyl-2-methylpyrimidine phosphate synthase] + (2S)-2-amino-5-hydroxy-4-oxopentanoyl-[4-amino-5-hydroxymethyl-2-methylpyrimidine phosphate synthase] + 4-amino-2-methyl-5-(phosphooxymethyl)pyrimidine + 3-oxopropanoate + 2 Fe(2+) + 2 H(+). The protein operates within cofactor biosynthesis; thiamine diphosphate biosynthesis. Functionally, responsible for the formation of the pyrimidine heterocycle in the thiamine biosynthesis pathway. Catalyzes the formation of hydroxymethylpyrimidine phosphate (HMP-P) from histidine and pyridoxal phosphate (PLP). The protein uses PLP and the active site histidine to form HMP-P, generating an inactive enzyme. The enzyme can only undergo a single turnover, which suggests it is a suicide enzyme. In Saccharomyces cerevisiae (strain ATCC 204508 / S288c) (Baker's yeast), this protein is 4-amino-5-hydroxymethyl-2-methylpyrimidine phosphate synthase THI13.